We begin with the raw amino-acid sequence, 537 residues long: CTP synthase (537 aa).

The segment at Met-1 to Leu-268 is amidoligase domain. Position 14 (Ser-14) interacts with CTP. A UTP-binding site is contributed by Ser-14. Residues Ser-15–Leu-20 and Asp-72 each bind ATP. Mg(2+) contacts are provided by Asp-72 and Glu-142. CTP-binding positions include Asp-149–Glu-151, Lys-188–Gln-193, and Lys-224. UTP-binding positions include Lys-188–Gln-193 and Lys-224. Residues Lys-293–Asp-533 enclose the Glutamine amidotransferase type-1 domain. Gly-352 is a binding site for L-glutamine. The active-site Nucleophile; for glutamine hydrolysis is Cys-379. L-glutamine is bound by residues Leu-380–Gln-383, Glu-403, and Arg-461. Active-site residues include His-506 and Glu-508.

It belongs to the CTP synthase family. As to quaternary structure, homotetramer.

The catalysed reaction is UTP + L-glutamine + ATP + H2O = CTP + L-glutamate + ADP + phosphate + 2 H(+). It carries out the reaction L-glutamine + H2O = L-glutamate + NH4(+). It catalyses the reaction UTP + NH4(+) + ATP = CTP + ADP + phosphate + 2 H(+). The protein operates within pyrimidine metabolism; CTP biosynthesis via de novo pathway; CTP from UDP: step 2/2. With respect to regulation, allosterically activated by GTP, when glutamine is the substrate; GTP has no effect on the reaction when ammonia is the substrate. The allosteric effector GTP functions by stabilizing the protein conformation that binds the tetrahedral intermediate(s) formed during glutamine hydrolysis. Inhibited by the product CTP, via allosteric rather than competitive inhibition. Catalyzes the ATP-dependent amination of UTP to CTP with either L-glutamine or ammonia as the source of nitrogen. Regulates intracellular CTP levels through interactions with the four ribonucleotide triphosphates. This Chlamydia pneumoniae (Chlamydophila pneumoniae) protein is CTP synthase.